A 108-amino-acid polypeptide reads, in one-letter code: Nucleoid-associated protein BP1550 (108 aa).

The segment at 87-108 (SQEKMASVTAGMPLPPGMKLPF) is disordered. A compositionally biased stretch (pro residues) spans 99–108 (PLPPGMKLPF).

Belongs to the YbaB/EbfC family. As to quaternary structure, homodimer.

It is found in the cytoplasm. The protein resides in the nucleoid. Its function is as follows. Binds to DNA and alters its conformation. May be involved in regulation of gene expression, nucleoid organization and DNA protection. In Bordetella pertussis (strain Tohama I / ATCC BAA-589 / NCTC 13251), this protein is Nucleoid-associated protein BP1550.